A 267-amino-acid chain; its full sequence is MRLIPLHNVDQVAKWSARYIVDRINQFQPTEARPFVLGLPTGGTPLKTYEALIELYKAGEVSFKHVVTFNMDEYVGLPKEHPESYHSFMYKNFFDHVDIQEKNINILNGNTEDHDAECQRYEEKIKSYGKIHLFMGGVGVDGHIAFNEPASSLSSRTRIKTLTEDTLIANSRFFDNDVNKVPKYALTIGVGTLLDAEEVMILVTGYNKAQALQAAVEGSINHLWTVTALQMHRRAIIVCDEPATQELKVKTVKYFTELEASAIRSVK.

Aspartate 72 (proton acceptor; for enolization step) is an active-site residue. Catalysis depends on aspartate 141, which acts as the For ring-opening step. Histidine 143 serves as the catalytic Proton acceptor; for ring-opening step. Glutamate 148 serves as the catalytic For ring-opening step.

The protein belongs to the glucosamine/galactosamine-6-phosphate isomerase family. NagB subfamily. In terms of assembly, homohexamer.

It carries out the reaction alpha-D-glucosamine 6-phosphate + H2O = beta-D-fructose 6-phosphate + NH4(+). The protein operates within amino-sugar metabolism; N-acetylneuraminate degradation; D-fructose 6-phosphate from N-acetylneuraminate: step 5/5. With respect to regulation, allosterically activated by N-acetylglucosamine 6-phosphate (GlcNAc6P). In terms of biological role, catalyzes the reversible isomerization-deamination of glucosamine 6-phosphate (GlcN6P) to form fructose 6-phosphate (Fru6P) and ammonium ion. The polypeptide is Glucosamine-6-phosphate deaminase (Pasteurella multocida (strain Pm70)).